The sequence spans 248 residues: MADS-box transcription factor 8 (248 aa).

The MADS-box domain occupies 1-61 (MGRGRVELKR…GKLYEFCSGQ (61 aa)). Residues 90-180 (VQSSRNEYLK…RRKLEESNQL (91 aa)) form the K-box domain.

As to quaternary structure, may interact with the K-box of MADS6 and MADS16. May interact with MADS13 and MADS18. Binds to FCA. Expressed in lodicules, stamens and carpels.

The protein localises to the nucleus. Probable transcription factor. May be involved in the control of flowering time. The sequence is that of MADS-box transcription factor 8 (MADS8) from Oryza sativa subsp. japonica (Rice).